The sequence spans 387 residues: Protein adenylyltransferase VopS (387 aa).

ATP contacts are provided by residues 76–77 (IT), 122–124 (LDS), 353–355 (GNG), and Arg-359. The region spanning 278 to 387 (LNMDNLKELH…NAENSLHGIK (110 aa)) is the Fido domain.

Its subcellular location is the secreted. The enzyme catalyses L-tyrosyl-[protein] + ATP = O-(5'-adenylyl)-L-tyrosyl-[protein] + diphosphate. It catalyses the reaction L-threonyl-[protein] + ATP = 3-O-(5'-adenylyl)-L-threonyl-[protein] + diphosphate. Adenylyltransferase involved in virulence by mediating the addition of adenosine 5'-monophosphate (AMP) to specific threonine residue of host Rho GTPases RhoA, Rac and Cdc42. The resulting AMPylation prevents the interaction of Rho GTPases with downstream effectors, thereby inhibiting actin assembly in infected cells. The protein is Protein adenylyltransferase VopS (vopS) of Vibrio parahaemolyticus serotype O3:K6 (strain RIMD 2210633).